The following is a 458-amino-acid chain: ATP synthase subunit beta (458 aa).

Residue 148-155 (GGAGVGKT) coordinates ATP.

Belongs to the ATPase alpha/beta chains family. In terms of assembly, F-type ATPases have 2 components, CF(1) - the catalytic core - and CF(0) - the membrane proton channel. CF(1) has five subunits: alpha(3), beta(3), gamma(1), delta(1), epsilon(1). CF(0) has three main subunits: a(1), b(2) and c(9-12). The alpha and beta chains form an alternating ring which encloses part of the gamma chain. CF(1) is attached to CF(0) by a central stalk formed by the gamma and epsilon chains, while a peripheral stalk is formed by the delta and b chains.

Its subcellular location is the cell inner membrane. It carries out the reaction ATP + H2O + 4 H(+)(in) = ADP + phosphate + 5 H(+)(out). In terms of biological role, produces ATP from ADP in the presence of a proton gradient across the membrane. The catalytic sites are hosted primarily by the beta subunits. This Pseudomonas putida (strain W619) protein is ATP synthase subunit beta.